A 20-amino-acid polypeptide reads, in one-letter code: Dermaseptin-N1 (20 aa).

L20 is subject to Leucine amide.

In terms of tissue distribution, expressed by the skin glands.

The protein localises to the secreted. Functionally, antimicrobial peptide with moderate activity against both Gram-positive and Gram-negative bacteria, and important activity against Leishmania species (L.amazonensis and L.infantum). Acts on both Leishmania promastigote and amastigote forms. Shows activity against E.coli (MIC=17.8 uM), S.aureus (MIC=32.3 uM) and the phytopathogenic bacterium Xanthomonas axonopodis (MIC=2 uM). Shows low cytotoxicity against mammalian cells in models of peritoneal macrophages. The protein is Dermaseptin-N1 of Pithecopus nordestinus (Northeastern Brazilian leaf frog).